Here is a 116-residue protein sequence, read N- to C-terminus: S-adenosylmethionine decarboxylase proenzyme (116 aa).

The active-site Schiff-base intermediate with substrate; via pyruvic acid is Ser-63. Ser-63 bears the Pyruvic acid (Ser); by autocatalysis mark. Residue His-68 is the Proton acceptor; for processing activity of the active site. The active-site Proton donor; for catalytic activity is the Cys-83.

This sequence belongs to the prokaryotic AdoMetDC family. Type 1 subfamily. Heterotetramer of two alpha and two beta chains arranged as a dimer of alpha/beta heterodimers. Pyruvate is required as a cofactor. Post-translationally, is synthesized initially as an inactive proenzyme. Formation of the active enzyme involves a self-maturation process in which the active site pyruvoyl group is generated from an internal serine residue via an autocatalytic post-translational modification. Two non-identical subunits are generated from the proenzyme in this reaction, and the pyruvate is formed at the N-terminus of the alpha chain, which is derived from the carboxyl end of the proenzyme. The post-translation cleavage follows an unusual pathway, termed non-hydrolytic serinolysis, in which the side chain hydroxyl group of the serine supplies its oxygen atom to form the C-terminus of the beta chain, while the remainder of the serine residue undergoes an oxidative deamination to produce ammonia and the pyruvoyl group blocking the N-terminus of the alpha chain.

It catalyses the reaction S-adenosyl-L-methionine + H(+) = S-adenosyl 3-(methylsulfanyl)propylamine + CO2. Its pathway is amine and polyamine biosynthesis; S-adenosylmethioninamine biosynthesis; S-adenosylmethioninamine from S-adenosyl-L-methionine: step 1/1. Catalyzes the decarboxylation of S-adenosylmethionine to S-adenosylmethioninamine (dcAdoMet), the propylamine donor required for the synthesis of the polyamines spermine and spermidine from the diamine putrescine. The chain is S-adenosylmethionine decarboxylase proenzyme from Clostridium botulinum (strain 657 / Type Ba4).